We begin with the raw amino-acid sequence, 413 residues long: Peptidase T (413 aa).

Residue H82 participates in Zn(2+) binding. Residue D84 is part of the active site. D145 contacts Zn(2+). E179 (proton acceptor) is an active-site residue. Zn(2+)-binding residues include E180, D202, and H384.

The protein belongs to the peptidase M20B family. The cofactor is Zn(2+).

The protein resides in the cytoplasm. The enzyme catalyses Release of the N-terminal residue from a tripeptide.. In terms of biological role, cleaves the N-terminal amino acid of tripeptides. This is Peptidase T from Latilactobacillus sakei subsp. sakei (strain 23K) (Lactobacillus sakei subsp. sakei).